The primary structure comprises 177 residues: Large ribosomal subunit protein uL6 (177 aa).

Belongs to the universal ribosomal protein uL6 family. In terms of assembly, part of the 50S ribosomal subunit.

Its function is as follows. This protein binds to the 23S rRNA, and is important in its secondary structure. It is located near the subunit interface in the base of the L7/L12 stalk, and near the tRNA binding site of the peptidyltransferase center. The sequence is that of Large ribosomal subunit protein uL6 from Parvibaculum lavamentivorans (strain DS-1 / DSM 13023 / NCIMB 13966).